The primary structure comprises 237 residues: Uridylate kinase (237 aa).

12–15 (KLSG) serves as a coordination point for ATP. The segment at 20–25 (GDEGFG) is involved in allosteric activation by GTP. Gly-54 contacts UMP. ATP-binding residues include Gly-55 and Arg-59. UMP-binding positions include Asp-74 and 135-142 (TGSPFFTT). ATP contacts are provided by Thr-162, Tyr-168, and Asp-171.

The protein belongs to the UMP kinase family. As to quaternary structure, homohexamer.

The protein resides in the cytoplasm. It catalyses the reaction UMP + ATP = UDP + ADP. It functions in the pathway pyrimidine metabolism; CTP biosynthesis via de novo pathway; UDP from UMP (UMPK route): step 1/1. With respect to regulation, allosterically activated by GTP. Inhibited by UTP. Catalyzes the reversible phosphorylation of UMP to UDP. This chain is Uridylate kinase, found in Mannheimia succiniciproducens (strain KCTC 0769BP / MBEL55E).